A 362-amino-acid polypeptide reads, in one-letter code: Oryzain gamma chain (362 aa).

An N-terminal signal peptide occupies residues 1-24 (MAHRRIILLLAAAAVAATSAVAAA). A propeptide spans 25 to 144 (SSGFDDSNPI…GNHRMRDAAA (120 aa)) (activation peptide). Asparagine 128 carries N-linked (GlcNAc...) asparagine glycosylation. 2 disulfide bridges follow: cysteine 166/cysteine 209 and cysteine 200/cysteine 242. Cysteine 169 is an active-site residue. The N-linked (GlcNAc...) asparagine glycan is linked to asparagine 258. Cysteine 300 and cysteine 350 form a disulfide bridge. Active-site residues include histidine 309 and asparagine 329.

It belongs to the peptidase C1 family. Expressed only in seeds.

The sequence is that of Oryzain gamma chain from Oryza sativa subsp. japonica (Rice).